The primary structure comprises 443 residues: Exodeoxyribonuclease 7 large subunit (443 aa).

Belongs to the XseA family. Heterooligomer composed of large and small subunits.

Its subcellular location is the cytoplasm. It carries out the reaction Exonucleolytic cleavage in either 5'- to 3'- or 3'- to 5'-direction to yield nucleoside 5'-phosphates.. Functionally, bidirectionally degrades single-stranded DNA into large acid-insoluble oligonucleotides, which are then degraded further into small acid-soluble oligonucleotides. This chain is Exodeoxyribonuclease 7 large subunit, found in Vibrio parahaemolyticus serotype O3:K6 (strain RIMD 2210633).